The primary structure comprises 269 residues: Phosphatidylglycerol--prolipoprotein diacylglyceryl transferase (269 aa).

The next 7 helical transmembrane spans lie at 17–37 (LKIH…WLLA), 56–76 (LVFW…VLFY), 92–112 (WKGG…ALWF), 120–140 (FFEL…AGRI), 174–194 (PSQL…LWLY), 202–222 (MAVS…VEFV), and 237–257 (LTMG…LIWL). Residue R139 participates in a 1,2-diacyl-sn-glycero-3-phospho-(1'-sn-glycerol) binding.

It belongs to the Lgt family.

It is found in the cell inner membrane. It carries out the reaction L-cysteinyl-[prolipoprotein] + a 1,2-diacyl-sn-glycero-3-phospho-(1'-sn-glycerol) = an S-1,2-diacyl-sn-glyceryl-L-cysteinyl-[prolipoprotein] + sn-glycerol 1-phosphate + H(+). The protein operates within protein modification; lipoprotein biosynthesis (diacylglyceryl transfer). In terms of biological role, catalyzes the transfer of the diacylglyceryl group from phosphatidylglycerol to the sulfhydryl group of the N-terminal cysteine of a prolipoprotein, the first step in the formation of mature lipoproteins. The protein is Phosphatidylglycerol--prolipoprotein diacylglyceryl transferase of Pseudomonas entomophila (strain L48).